The chain runs to 904 residues: Protein translocase subunit SecA (904 aa).

ATP is bound by residues Gln89, 107–111, and Asp502; that span reads GEGKT. Residues Cys888, Cys890, Cys899, and His900 each coordinate Zn(2+).

Belongs to the SecA family. Monomer and homodimer. Part of the essential Sec protein translocation apparatus which comprises SecA, SecYEG and auxiliary proteins SecDF-YajC and YidC. It depends on Zn(2+) as a cofactor.

The protein localises to the cell inner membrane. The protein resides in the cytoplasm. The catalysed reaction is ATP + H2O + cellular proteinSide 1 = ADP + phosphate + cellular proteinSide 2.. Its function is as follows. Part of the Sec protein translocase complex. Interacts with the SecYEG preprotein conducting channel. Has a central role in coupling the hydrolysis of ATP to the transfer of proteins into and across the cell membrane, serving both as a receptor for the preprotein-SecB complex and as an ATP-driven molecular motor driving the stepwise translocation of polypeptide chains across the membrane. This is Protein translocase subunit SecA from Roseobacter denitrificans (strain ATCC 33942 / OCh 114) (Erythrobacter sp. (strain OCh 114)).